Consider the following 122-residue polypeptide: Large ribosomal subunit protein uL14 (122 aa).

It belongs to the universal ribosomal protein uL14 family. As to quaternary structure, part of the 50S ribosomal subunit. Forms a cluster with proteins L3 and L19. In the 70S ribosome, L14 and L19 interact and together make contacts with the 16S rRNA in bridges B5 and B8.

Functionally, binds to 23S rRNA. Forms part of two intersubunit bridges in the 70S ribosome. This is Large ribosomal subunit protein uL14 from Chlorobium luteolum (strain DSM 273 / BCRC 81028 / 2530) (Pelodictyon luteolum).